The following is a 475-amino-acid chain: Argininosuccinate lyase (475 aa).

This sequence belongs to the lyase 1 family. Argininosuccinate lyase subfamily.

Its subcellular location is the cytoplasm. It catalyses the reaction 2-(N(omega)-L-arginino)succinate = fumarate + L-arginine. Its pathway is amino-acid biosynthesis; L-arginine biosynthesis; L-arginine from L-ornithine and carbamoyl phosphate: step 3/3. The polypeptide is Argininosuccinate lyase (Leifsonia xyli subsp. xyli (strain CTCB07)).